A 143-amino-acid polypeptide reads, in one-letter code: UPF0201 protein Tneu_0685 (143 aa).

This sequence belongs to the UPF0201 family.

The sequence is that of UPF0201 protein Tneu_0685 from Pyrobaculum neutrophilum (strain DSM 2338 / JCM 9278 / NBRC 100436 / V24Sta) (Thermoproteus neutrophilus).